Here is a 278-residue protein sequence, read N- to C-terminus: Large ribosomal subunit protein uL24m (278 aa).

In terms of domain architecture, KOW spans 109–142 (FFPGDLVQVMVGKDKGRQGLVLTISRDSSEVVVD).

It belongs to the universal ribosomal protein uL24 family.

It is found in the mitochondrion. The polypeptide is Large ribosomal subunit protein uL24m (mrpl-24) (Caenorhabditis briggsae).